The following is an 87-amino-acid chain: Putative RNase MJ1548 (87 aa).

Residues arginine 65 and histidine 70 contribute to the active site. An RX(4)HXY motif motif is present at residues 65–72; the sequence is RNAIVHKY. Residue tyrosine 72 is modified to O-di-AMP-tyrosine.

It belongs to the HepT RNase toxin family. In terms of assembly, homodimer, probably forms a complex with cognate antitoxin MJ1547. Post-translationally, modified by cognate antitoxin MJ1547; probably at least 2 successive AMPylation events occur on Tyr-72.

Probable toxic component of a putative type VII toxin-antitoxin (TA) system, probably an RNase. Probably neutralized by cognate antitoxin MJ1547. Neutralization may be due to AMPylation by antitoxin MJ1547. The protein is Putative RNase MJ1548 of Methanocaldococcus jannaschii (strain ATCC 43067 / DSM 2661 / JAL-1 / JCM 10045 / NBRC 100440) (Methanococcus jannaschii).